Consider the following 325-residue polypeptide: Beta-ketoacyl-[acyl-carrier-protein] synthase III (325 aa).

Residues C116 and H252 contribute to the active site. Residues 253-257 form an ACP-binding region; that stretch reads QANLR. Residue N282 is part of the active site.

This sequence belongs to the thiolase-like superfamily. FabH family. As to quaternary structure, homodimer.

The protein resides in the cytoplasm. The catalysed reaction is malonyl-[ACP] + acetyl-CoA + H(+) = 3-oxobutanoyl-[ACP] + CO2 + CoA. Its pathway is lipid metabolism; fatty acid biosynthesis. In terms of biological role, catalyzes the condensation reaction of fatty acid synthesis by the addition to an acyl acceptor of two carbons from malonyl-ACP. Catalyzes the first condensation reaction which initiates fatty acid synthesis and may therefore play a role in governing the total rate of fatty acid production. Possesses both acetoacetyl-ACP synthase and acetyl transacylase activities. Its substrate specificity determines the biosynthesis of branched-chain and/or straight-chain of fatty acids. The protein is Beta-ketoacyl-[acyl-carrier-protein] synthase III of Xanthomonas oryzae pv. oryzae (strain MAFF 311018).